The following is a 165-amino-acid chain: Glycine cleavage system H protein, mitochondrial (165 aa).

The N-terminal 31 residues, 1–31 (MALRIWASSTAKALRLSSASRPHFSPLFRCF), are a transit peptide targeting the mitochondrion. In terms of domain architecture, Lipoyl-binding spans 55 to 137 (VATIGITDHA…YEDGWMIKVK (83 aa)). Lys-96 carries the N6-lipoyllysine modification.

Belongs to the GcvH family. The glycine cleavage system is composed of four components that only loosely associate: the P protein (EC 1.4.4.2), the T protein (EC 2.1.2.10), the L protein (EC 1.8.1.4) and the lipoyl-bearing H protein. (R)-lipoate is required as a cofactor. As to expression, expressed in roots, stems and leaves.

It is found in the mitochondrion. Functionally, the glycine cleavage system catalyzes the degradation of glycine. The H protein shuttles the methylamine group of glycine from the P protein to the T protein. The polypeptide is Glycine cleavage system H protein, mitochondrial (GDCSH) (Flaveria trinervia (Clustered yellowtops)).